The primary structure comprises 542 residues: Global nitrogen regulator NrpR (542 aa).

The interval 12–77 is winged helix-turn-helix; that stretch reads IEILDILSKS…VITERGLEEL (66 aa). NRD regions lie at residues 85-320 and 321-542; these read RLGS…KANI and RIKT…YKEI.

It belongs to the NrpR family. As to quaternary structure, homodimer.

Under nitrogen limitation, binding of the intracellular nitrogen metabolite 2-oxoglutarate to NrpR decreases the binding affinity of NrpR to DNA, leading to initiation of transcription. Transcriptional repressor of nitrogen fixation and assimilation genes. Binds to two tandem operators in the glnA and nif promoters, thereby blocking transcription of the genes. The polypeptide is Global nitrogen regulator NrpR (Methanocaldococcus jannaschii (strain ATCC 43067 / DSM 2661 / JAL-1 / JCM 10045 / NBRC 100440) (Methanococcus jannaschii)).